Consider the following 438-residue polypeptide: Trigger factor (438 aa).

The region spanning Gly162–Pro247 is the PPIase FKBP-type domain.

It belongs to the FKBP-type PPIase family. Tig subfamily.

It is found in the cytoplasm. It catalyses the reaction [protein]-peptidylproline (omega=180) = [protein]-peptidylproline (omega=0). In terms of biological role, involved in protein export. Acts as a chaperone by maintaining the newly synthesized protein in an open conformation. Functions as a peptidyl-prolyl cis-trans isomerase. This Caldicellulosiruptor saccharolyticus (strain ATCC 43494 / DSM 8903 / Tp8T 6331) protein is Trigger factor.